Consider the following 84-residue polypeptide: ATP synthase subunit c (84 aa).

The next 2 helical transmembrane spans lie at 8–28 and 56–76; these read VAGM…GGGI and IIGS…AILL.

The protein belongs to the ATPase C chain family. F-type ATPases have 2 components, F(1) - the catalytic core - and F(0) - the membrane proton channel. F(1) has five subunits: alpha(3), beta(3), gamma(1), delta(1), epsilon(1). F(0) has three main subunits: a(1), b(2) and c(10-14). The alpha and beta chains form an alternating ring which encloses part of the gamma chain. F(1) is attached to F(0) by a central stalk formed by the gamma and epsilon chains, while a peripheral stalk is formed by the delta and b chains.

It localises to the cell membrane. In terms of biological role, f(1)F(0) ATP synthase produces ATP from ADP in the presence of a proton or sodium gradient. F-type ATPases consist of two structural domains, F(1) containing the extramembraneous catalytic core and F(0) containing the membrane proton channel, linked together by a central stalk and a peripheral stalk. During catalysis, ATP synthesis in the catalytic domain of F(1) is coupled via a rotary mechanism of the central stalk subunits to proton translocation. Key component of the F(0) channel; it plays a direct role in translocation across the membrane. A homomeric c-ring of between 10-14 subunits forms the central stalk rotor element with the F(1) delta and epsilon subunits. This chain is ATP synthase subunit c, found in Clostridium novyi (strain NT).